Consider the following 107-residue polypeptide: U1-lycotoxin-Ls1f (107 aa).

The first 20 residues, 1-20, serve as a signal peptide directing secretion; that stretch reads MMKVLVVVALLVTLISYSSS. Residues 21-41 constitute a propeptide that is removed on maturation; sequence EGIDDLEADELLSLMANEQTR. Disulfide bonds link C44/C59, C51/C68, C58/C86, and C70/C84.

Belongs to the neurotoxin 19 (CSTX) family. 04 (U1-Lctx) subfamily. Expressed by the venom gland.

The protein localises to the secreted. The chain is U1-lycotoxin-Ls1f from Lycosa singoriensis (Wolf spider).